A 181-amino-acid chain; its full sequence is GTP cyclohydrolase 1 2 (181 aa).

It belongs to the GTP cyclohydrolase I family. In terms of assembly, homomer.

The catalysed reaction is GTP + H2O = 7,8-dihydroneopterin 3'-triphosphate + formate + H(+). It functions in the pathway cofactor biosynthesis; 7,8-dihydroneopterin triphosphate biosynthesis; 7,8-dihydroneopterin triphosphate from GTP: step 1/1. In Pseudomonas syringae pv. tomato (strain ATCC BAA-871 / DC3000), this protein is GTP cyclohydrolase 1 2.